The primary structure comprises 93 residues: Large ribosomal subunit protein bL27 (93 aa).

The propeptide occupies M1–F9.

It belongs to the bacterial ribosomal protein bL27 family. Post-translationally, the N-terminus is cleaved by ribosomal processing cysteine protease Prp.

In Bacillus licheniformis (strain ATCC 14580 / DSM 13 / JCM 2505 / CCUG 7422 / NBRC 12200 / NCIMB 9375 / NCTC 10341 / NRRL NRS-1264 / Gibson 46), this protein is Large ribosomal subunit protein bL27.